Here is a 374-residue protein sequence, read N- to C-terminus: Guanine nucleotide-binding protein subunit alpha-15 (374 aa).

One can recognise a G-alpha domain in the interval 41 to 374; sequence GELKLLLLGP…ARYLDEINLL (334 aa). Residues 44–57 form a G1 motif region; that stretch reads KLLLLGPGESGKST. Residues 49 to 56, 183 to 189, 208 to 212, 277 to 280, and Ala-346 contribute to the GTP site; these read GPGESGKS, LRSRMPT, DVGGQ, and NKTD. Ser-56 contributes to the Mg(2+) binding site. The tract at residues 181–189 is G2 motif; that stretch reads DVLRSRMPT. Arg-186 is subject to ADP-ribosylarginine; by cholera toxin. Residue Thr-189 participates in Mg(2+) binding. The tract at residues 204-213 is G3 motif; the sequence is LRIVDVGGQK. The interval 273 to 280 is G4 motif; the sequence is ILFLNKTD. Positions 344 to 349 are G5 motif; that stretch reads TCATDT.

Belongs to the G-alpha family. G(q) subfamily. As to quaternary structure, g proteins are composed of 3 units; alpha, beta and gamma. The alpha chain contains the guanine nucleotide binding site. In terms of tissue distribution, specifically expressed in hematopoietic cells. Expressed in epididymis (at protein level).

Guanine nucleotide-binding proteins (G proteins) are involved as modulators or transducers in various transmembrane signaling systems. In Homo sapiens (Human), this protein is Guanine nucleotide-binding protein subunit alpha-15 (GNA15).